We begin with the raw amino-acid sequence, 156 residues long: Flagellar assembly factor FliW (156 aa).

It belongs to the FliW family. In terms of assembly, interacts with translational regulator CsrA and flagellin(s).

The protein resides in the cytoplasm. In terms of biological role, acts as an anti-CsrA protein, binds CsrA and prevents it from repressing translation of its target genes, one of which is flagellin. Binds to flagellin and participates in the assembly of the flagellum. The chain is Flagellar assembly factor FliW from Lachnoclostridium phytofermentans (strain ATCC 700394 / DSM 18823 / ISDg) (Clostridium phytofermentans).